A 729-amino-acid chain; its full sequence is Fatty acid oxidation complex subunit alpha (729 aa).

Residues 1-189 form an enoyl-CoA hydratase/isomerase region; that stretch reads MLYKGDTLYL…KIGLVDGVVA (189 aa). A substrate-binding site is contributed by aspartate 296. Residues 311-729 are 3-hydroxyacyl-CoA dehydrogenase; that stretch reads ETPKHAAVLG…ARPVGALKTA (419 aa). NAD(+) is bound by residues methionine 324, aspartate 343, 400-402, lysine 407, and serine 429; that span reads VVE. Histidine 450 functions as the For 3-hydroxyacyl-CoA dehydrogenase activity in the catalytic mechanism. Residue asparagine 453 participates in NAD(+) binding. 2 residues coordinate substrate: asparagine 500 and tyrosine 660.

It in the N-terminal section; belongs to the enoyl-CoA hydratase/isomerase family. The protein in the C-terminal section; belongs to the 3-hydroxyacyl-CoA dehydrogenase family. In terms of assembly, heterotetramer of two alpha chains (FadB) and two beta chains (FadA).

The enzyme catalyses a (3S)-3-hydroxyacyl-CoA + NAD(+) = a 3-oxoacyl-CoA + NADH + H(+). It catalyses the reaction a (3S)-3-hydroxyacyl-CoA = a (2E)-enoyl-CoA + H2O. The catalysed reaction is a 4-saturated-(3S)-3-hydroxyacyl-CoA = a (3E)-enoyl-CoA + H2O. It carries out the reaction (3S)-3-hydroxybutanoyl-CoA = (3R)-3-hydroxybutanoyl-CoA. The enzyme catalyses a (3Z)-enoyl-CoA = a 4-saturated (2E)-enoyl-CoA. It catalyses the reaction a (3E)-enoyl-CoA = a 4-saturated (2E)-enoyl-CoA. It functions in the pathway lipid metabolism; fatty acid beta-oxidation. Functionally, involved in the aerobic and anaerobic degradation of long-chain fatty acids via beta-oxidation cycle. Catalyzes the formation of 3-oxoacyl-CoA from enoyl-CoA via L-3-hydroxyacyl-CoA. It can also use D-3-hydroxyacyl-CoA and cis-3-enoyl-CoA as substrate. This is Fatty acid oxidation complex subunit alpha from Klebsiella pneumoniae (strain 342).